A 156-amino-acid chain; its full sequence is Arginine repressor (156 aa).

This sequence belongs to the ArgR family.

It is found in the cytoplasm. Its pathway is amino-acid biosynthesis; L-arginine biosynthesis [regulation]. Its function is as follows. Regulates arginine biosynthesis genes. The protein is Arginine repressor of Shewanella halifaxensis (strain HAW-EB4).